A 422-amino-acid chain; its full sequence is 5-hydroxytryptamine receptor 1A (422 aa).

Over Met-1–Ile-38 the chain is Extracellular. Residues Asn-10, Asn-11, and Asn-24 are each glycosylated (N-linked (GlcNAc...) asparagine). A helical membrane pass occupies residues Thr-39 to Ala-59. Residues Ala-60–Tyr-73 are Cytoplasmic-facing. Residues Leu-74–Val-98 traverse the membrane as a helical segment. Residues Leu-99–Val-107 lie on the Extracellular side of the membrane. Residues Thr-108–Leu-132 traverse the membrane as a helical segment. Cys-109 and Cys-187 form a disulfide bridge. The serotonin site is built by Asp-116 and Cys-120. The DRY motif; important for ligand-induced conformation changes signature appears at Asp-133 to Tyr-135. The Cytoplasmic segment spans residues Asp-133 to Arg-152. The helical transmembrane segment at Ala-153–Gly-174 threads the bilayer. Over Trp-175–His-193 the chain is Extracellular. A helical transmembrane segment spans residues Gly-194–Gly-216. Residues Arg-217 to Thr-346 are Cytoplasmic-facing. Residues Gly-237–Glu-262 form a disordered region. Residues Lys-345, Thr-346, and Gly-352 each coordinate 1D-myo-inositol 4-phosphate. The helical transmembrane segment at Leu-347–Phe-370 threads the bilayer. The Extracellular portion of the chain corresponds to Cys-371 to Pro-378. Residues Thr-379 to Phe-403 form a helical membrane-spanning segment. Positions Asn-396–Tyr-400 match the NPxxY motif; important for ligand-induced conformation changes and signaling motif. 1D-myo-inositol 4-phosphate is bound by residues Phe-403, Asn-404, and Lys-405. Topologically, residues Asn-404 to Arg-422 are cytoplasmic.

Belongs to the G-protein coupled receptor 1 family. 5-hydroxytryptamine receptor subfamily. HTR1A sub-subfamily. In terms of assembly, heterodimer; heterodimerizes with GPER1. Interacts with YIF1B. Interacts with GPR39 and GALR1.

It is found in the cell membrane. The protein localises to the cell projection. The protein resides in the dendrite. Its activity is regulated as follows. G-protein coupled receptor activity is regulated by lipids: phosphatidylinositol 4-phosphate increases HTR1A-mediated activity. G-protein coupled receptor for 5-hydroxytryptamine (serotonin). Also functions as a receptor for various drugs and psychoactive substances. Ligand binding causes a conformation change that triggers signaling via guanine nucleotide-binding proteins (G proteins) and modulates the activity of downstream effectors, such as adenylate cyclase. HTR1A is coupled to G(i)/G(o) G alpha proteins and mediates inhibitory neurotransmission: signaling inhibits adenylate cyclase activity and activates a phosphatidylinositol-calcium second messenger system that regulates the release of Ca(2+) ions from intracellular stores. Beta-arrestin family members regulate signaling by mediating both receptor desensitization and resensitization processes. This Equus caballus (Horse) protein is 5-hydroxytryptamine receptor 1A (HTR1A).